A 248-amino-acid polypeptide reads, in one-letter code: Probable succinyl-CoA:3-ketoacid coenzyme A transferase subunit A (248 aa).

24 to 30 (GGFGLCG) contacts CoA.

This sequence belongs to the 3-oxoacid CoA-transferase subunit A family. In terms of assembly, heterodimer of a subunit A and a subunit B.

It carries out the reaction a 3-oxo acid + succinyl-CoA = a 3-oxoacyl-CoA + succinate. This Mycobacterium bovis (strain ATCC BAA-935 / AF2122/97) protein is Probable succinyl-CoA:3-ketoacid coenzyme A transferase subunit A (scoA).